We begin with the raw amino-acid sequence, 413 residues long: CinA-like protein (413 aa).

Belongs to the CinA family.

The polypeptide is CinA-like protein (Geotalea daltonii (strain DSM 22248 / JCM 15807 / FRC-32) (Geobacter daltonii)).